A 167-amino-acid polypeptide reads, in one-letter code: SsrA-binding protein (167 aa).

Belongs to the SmpB family.

The protein resides in the cytoplasm. Required for rescue of stalled ribosomes mediated by trans-translation. Binds to transfer-messenger RNA (tmRNA), required for stable association of tmRNA with ribosomes. tmRNA and SmpB together mimic tRNA shape, replacing the anticodon stem-loop with SmpB. tmRNA is encoded by the ssrA gene; the 2 termini fold to resemble tRNA(Ala) and it encodes a 'tag peptide', a short internal open reading frame. During trans-translation Ala-aminoacylated tmRNA acts like a tRNA, entering the A-site of stalled ribosomes, displacing the stalled mRNA. The ribosome then switches to translate the ORF on the tmRNA; the nascent peptide is terminated with the 'tag peptide' encoded by the tmRNA and targeted for degradation. The ribosome is freed to recommence translation, which seems to be the essential function of trans-translation. The protein is SsrA-binding protein of Stenotrophomonas maltophilia (strain R551-3).